Consider the following 270-residue polypeptide: Release factor glutamine methyltransferase (270 aa).

S-adenosyl-L-methionine-binding positions include 112 to 116 (GTGSG), Asp-135, Trp-162, and Asn-178. 178 to 181 (NPPY) contributes to the substrate binding site.

The protein belongs to the protein N5-glutamine methyltransferase family. PrmC subfamily.

The enzyme catalyses L-glutaminyl-[peptide chain release factor] + S-adenosyl-L-methionine = N(5)-methyl-L-glutaminyl-[peptide chain release factor] + S-adenosyl-L-homocysteine + H(+). Its function is as follows. Methylates the class 1 translation termination release factors RF1/PrfA and RF2/PrfB on the glutamine residue of the universally conserved GGQ motif. The polypeptide is Release factor glutamine methyltransferase (Bordetella pertussis (strain Tohama I / ATCC BAA-589 / NCTC 13251)).